Consider the following 206-residue polypeptide: Small ribosomal subunit protein uS4 (206 aa).

The tract at residues 18–45 (NIWGRPKSPVNRREYGPGQHGQRRKGKM) is disordered. Residues 94–157 (RRLDAVVYRA…KQLASVLEAV (64 aa)) enclose the S4 RNA-binding domain.

The protein belongs to the universal ribosomal protein uS4 family. As to quaternary structure, part of the 30S ribosomal subunit. Contacts protein S5. The interaction surface between S4 and S5 is involved in control of translational fidelity.

In terms of biological role, one of the primary rRNA binding proteins, it binds directly to 16S rRNA where it nucleates assembly of the body of the 30S subunit. Its function is as follows. With S5 and S12 plays an important role in translational accuracy. The chain is Small ribosomal subunit protein uS4 from Ruegeria pomeroyi (strain ATCC 700808 / DSM 15171 / DSS-3) (Silicibacter pomeroyi).